The sequence spans 199 residues: Ribosome biogenesis protein RLP24 (199 aa).

Positions 147-182 (KEQERAESVSEQEESEEEEEDMEIDSDEEEEEQLEK) are disordered. The segment covering 156-179 (SEQEESEEEEEDMEIDSDEEEEEQ) has biased composition (acidic residues). At S172 the chain carries Phosphoserine.

The protein belongs to the eukaryotic ribosomal protein eL24 family. In terms of assembly, associated with nucleolar and cytoplasmic pre-60S particles. At the end of biogenesis it dissociates from cytoplasmic pre-60S particles and is likely to be exchanged for its ribosomal homolog, RPL24. Interacts (via C-terminus) with AFG2 (hexameric form); the interaction is direct, recruits AFG2 to pre-60S ribosomal particles and promotes AFG2 ATPase activity and RLP24 release from pre-60S ribosomal particles. Interacts with NOG1; the interaction is direct.

The protein localises to the cytoplasm. Its subcellular location is the nucleus. Functionally, involved in the biogenesis of the 60S ribosomal subunit. Ensures the docking of NOG1 to pre-60S ribosomal particles. Activates and recruits ATPase AFG2 to cytoplasmic pre-60S ribosomal particles. This chain is Ribosome biogenesis protein RLP24 (RLP24), found in Saccharomyces cerevisiae (strain ATCC 204508 / S288c) (Baker's yeast).